We begin with the raw amino-acid sequence, 101 residues long: MQKFVWKVVCLENKIAICLDQQLADKTSPVTEYFFWPQSDAWDELNKLLESKPWITLSNRIFVLNILTDLINYWDEKKSFDQSDWPLLKEKFPDVVFIYIK.

It belongs to the chloroplast-specific ribosomal protein cS23 family. Part of the 30S ribosomal subunit.

It is found in the plastid. The protein resides in the chloroplast. In terms of biological role, probably a ribosomal protein or a ribosome-associated protein. The chain is Small ribosomal subunit protein cS23 (ycf65) from Euglena myxocylindracea.